A 496-amino-acid chain; its full sequence is Amidophosphoribosyltransferase (496 aa).

A propeptide spanning residues 1-21 is cleaved from the precursor; sequence MNQSHSFPTDDPLDGDTLHEE. Cysteine 22 functions as the Nucleophile in the catalytic mechanism. A Glutamine amidotransferase type-2 domain is found at 22 to 241; it reads CGVFGILGHP…NGEVIICEIQ (220 aa).

It in the C-terminal section; belongs to the purine/pyrimidine phosphoribosyltransferase family.

The catalysed reaction is 5-phospho-beta-D-ribosylamine + L-glutamate + diphosphate = 5-phospho-alpha-D-ribose 1-diphosphate + L-glutamine + H2O. It functions in the pathway purine metabolism; IMP biosynthesis via de novo pathway; N(1)-(5-phospho-D-ribosyl)glycinamide from 5-phospho-alpha-D-ribose 1-diphosphate: step 1/2. Functionally, catalyzes the formation of phosphoribosylamine from phosphoribosylpyrophosphate (PRPP) and glutamine. This Rhizobium etli (strain ATCC 51251 / DSM 11541 / JCM 21823 / NBRC 15573 / CFN 42) protein is Amidophosphoribosyltransferase.